Reading from the N-terminus, the 277-residue chain is R-spondin-3 (277 aa).

Positions 1–21 (MHLRLISCFFIILNFMEYIGS) are cleaved as a signal peptide. FU repeat units lie at residues 35-86 (PNVS…GYYG) and 92-135 (INKC…GLEA). N-linked (GlcNAc...) asparagine glycosylation is present at N36. 11 disulfide bridges follow: C41/C48, C45/C54, C57/C76, C80/C95, C98/C105, C102/C111, C114/C125, C129/C142, C148/C190, C159/C166, and C199/C206. The 61-residue stretch at 147 to 207 (HCEASEWSPW…TCIVQRKKCS (61 aa)) folds into the TSP type-1 domain. Positions 210–277 (ERGKKGRERK…QKSVSVSTVH (68 aa)) are disordered. The segment covering 213–223 (KKGRERKRKKL) has biased composition (basic residues). A compositionally biased stretch (low complexity) spans 232-245 (SSSSDSKGLESSIE).

This sequence belongs to the R-spondin family. In terms of assembly, interacts with the extracellular domain of FZD8 and LRP6. It however does not form a ternary complex with FZD8 and LRP6. Interacts with WNT1. Binds heparin. Interacts with LGR4, LGR5 and LGR6. In terms of tissue distribution, highly expressed in endothelial cells.

The protein localises to the secreted. Activator of the canonical Wnt signaling pathway by acting as a ligand for LGR4-6 receptors, which acts as a key regulator of angiogenesis. Upon binding to LGR4-6 (LGR4, LGR5 or LGR6), LGR4-6 associate with phosphorylated LRP6 and frizzled receptors that are activated by extracellular Wnt receptors, triggering the canonical Wnt signaling pathway to increase expression of target genes. Also regulates the canonical Wnt/beta-catenin-dependent pathway and non-canonical Wnt signaling by acting as an inhibitor of ZNRF3, an important regulator of the Wnt signaling pathway. Acts as a ligand for frizzled FZD8 and LRP6. May negatively regulate the TGF-beta pathway. Acts as a key regulator of angiogenesis by controlling vascular stability and pruning: acts by activating the non-canonical Wnt signaling pathway in endothelial cells. Can also amplify Wnt signaling pathway independently of LGR4-6 receptors, possibly by acting as a direct antagonistic ligand to RNF43 and ZNRF3. In Mus musculus (Mouse), this protein is R-spondin-3 (Rspo3).